Consider the following 896-residue polypeptide: Translation initiation factor IF-2 (896 aa).

Disordered regions lie at residues 32–99 and 117–304; these read LAQA…TALP and EITS…KQAE. The segment covering 35 to 48 has biased composition (polar residues); it reads AGSSDTKNSPASKA. Over residues 153 to 169 the composition is skewed to basic and acidic residues; the sequence is TPERIEETPIIRTRTEP. The span at 203–214 shows a compositional bias: low complexity; it reads AASTEETTQQQP. A compositionally biased stretch (polar residues) spans 215–227; the sequence is RQNDAASHNNKQQ. Residues 228–241 show a composition bias toward low complexity; that stretch reads PSGTSSRPASSAPS. Over residues 256 to 280 the composition is skewed to basic and acidic residues; the sequence is RGSERDRSKRSDESVKAFTGRDRYG. A tr-type G domain is found at 401 to 570; it reads IRSPIVAFMG…ALQAEVLELK (170 aa). The segment at 410-417 is G1; the sequence is GHVDHGKT. 410 to 417 serves as a coordination point for GTP; sequence GHVDHGKT. The segment at 435-439 is G2; that stretch reads AITQH. The interval 456–459 is G3; sequence DTPG. GTP contacts are provided by residues 456–460 and 510–513; these read DTPGH and NKCD. A G4 region spans residues 510–513; it reads NKCD. The G5 stretch occupies residues 546–548; the sequence is SAK.

This sequence belongs to the TRAFAC class translation factor GTPase superfamily. Classic translation factor GTPase family. IF-2 subfamily.

Its subcellular location is the cytoplasm. Functionally, one of the essential components for the initiation of protein synthesis. Protects formylmethionyl-tRNA from spontaneous hydrolysis and promotes its binding to the 30S ribosomal subunits. Also involved in the hydrolysis of GTP during the formation of the 70S ribosomal complex. The sequence is that of Translation initiation factor IF-2 from Chlamydia trachomatis serovar L2 (strain ATCC VR-902B / DSM 19102 / 434/Bu).